The chain runs to 258 residues: NAD(P)H-hydrate epimerase (258 aa).

The YjeF N-terminal domain maps to 15–244 (AFQLDQELMS…RIAKEYGIED (230 aa)). A (6S)-NADPHX-binding site is contributed by 75–79 (NNGGD). K(+)-binding residues include Asn-76 and Asp-145. Residues 149–155 (GFSFKPP) and Asp-181 contribute to the (6S)-NADPHX site. Ser-184 contributes to the K(+) binding site.

The protein belongs to the NnrE/AIBP family. K(+) serves as cofactor.

Its subcellular location is the cytoplasm. It is found in the mitochondrion. It catalyses the reaction (6R)-NADHX = (6S)-NADHX. The catalysed reaction is (6R)-NADPHX = (6S)-NADPHX. Its function is as follows. Catalyzes the epimerization of the S- and R-forms of NAD(P)HX, a damaged form of NAD(P)H that is a result of enzymatic or heat-dependent hydration. This is a prerequisite for the S-specific NAD(P)H-hydrate dehydratase to allow the repair of both epimers of NAD(P)HX. In Candida albicans (strain WO-1) (Yeast), this protein is NAD(P)H-hydrate epimerase.